Here is a 193-residue protein sequence, read N- to C-terminus: MSLDTVVEDIRDEAQARASEIQADADERAEKIIEEAEADAEDILEERKDEVEEQIEREREQALSSANLEAKQNRLEARRDVLDDVLNRVEDELASLSNAKREELTKPLVTAAITEFDDDETVKLYARADDADLLNSLLEEHEKAEYAGEYDCLGGVVAEGQQSRVRVNNTFDSILDAVWEETLGDVSEQLFDQ.

The protein belongs to the V-ATPase E subunit family. As to quaternary structure, has multiple subunits with at least A(3), B(3), C, D, E, F, H, I and proteolipid K(x).

It localises to the cell membrane. Functionally, component of the A-type ATP synthase that produces ATP from ADP in the presence of a proton gradient across the membrane. The sequence is that of A-type ATP synthase subunit E from Haloquadratum walsbyi (strain DSM 16790 / HBSQ001).